Reading from the N-terminus, the 33-residue chain is Photosystem II reaction center protein Psb30 (33 aa).

A helical membrane pass occupies residues 5 to 25 (VVAQLTVLALIVVSGPLVIGL).

The protein belongs to the Psb30/Ycf12 family. As to quaternary structure, PSII is composed of 1 copy each of membrane proteins PsbA, PsbB, PsbC, PsbD, PsbE, PsbF, PsbH, PsbI, PsbJ, PsbK, PsbL, PsbM, PsbT, PsbX, PsbY, PsbZ, Psb30/Ycf12, peripheral proteins of the oxygen-evolving complex and a large number of cofactors. It forms dimeric complexes.

It is found in the plastid. The protein localises to the chloroplast thylakoid membrane. A core subunit of photosystem II (PSII), probably helps stabilize the reaction center. This Zygnema circumcarinatum (Green alga) protein is Photosystem II reaction center protein Psb30.